A 414-amino-acid chain; its full sequence is Histidine--tRNA ligase (414 aa).

The protein belongs to the class-II aminoacyl-tRNA synthetase family. As to quaternary structure, homodimer.

The protein localises to the cytoplasm. The catalysed reaction is tRNA(His) + L-histidine + ATP = L-histidyl-tRNA(His) + AMP + diphosphate + H(+). This chain is Histidine--tRNA ligase, found in Anaeromyxobacter dehalogenans (strain 2CP-1 / ATCC BAA-258).